A 265-amino-acid chain; its full sequence is MQPDLHCRTLAAHTLKHFRALSPLTHCMTNDVVQTFTANTLLALGASPAMVIDPVEARPFAAIANALLVNVGTLTASRADAMRAAVESAYDAKTPWTLDPVAVGALEFRRRFCLDLLSLRPAAIRGNASEILALSGMALGGRGVDTTEAALAALPAAQALAHQIDCIVVVTREIDYVTNGQRTLSIPGGDPLMTRIVGTGCALSAVVAASCALPGAALDNVASACCWMKLAGQAAAERSEGPGSFIPAFLDALYHLDVEAANEEN.

Met50 is a substrate binding site. 2 residues coordinate ATP: Arg125 and Thr171. Gly198 provides a ligand contact to substrate.

The protein belongs to the Thz kinase family. The cofactor is Mg(2+).

The enzyme catalyses 5-(2-hydroxyethyl)-4-methylthiazole + ATP = 4-methyl-5-(2-phosphooxyethyl)-thiazole + ADP + H(+). Its pathway is cofactor biosynthesis; thiamine diphosphate biosynthesis; 4-methyl-5-(2-phosphoethyl)-thiazole from 5-(2-hydroxyethyl)-4-methylthiazole: step 1/1. Catalyzes the phosphorylation of the hydroxyl group of 4-methyl-5-beta-hydroxyethylthiazole (THZ). In Salmonella paratyphi C (strain RKS4594), this protein is Hydroxyethylthiazole kinase.